Here is a 249-residue protein sequence, read N- to C-terminus: Mediator of RNA polymerase II transcription subunit 8 (249 aa).

The stretch at 1 to 26 (MQREEKQLDMLLEAVLNRLNDLKHSI) forms a coiled coil. Composition is skewed to polar residues over residues 215-224 (SPMSAVSPSG) and 235-249 (IKTNIKSANQVHPYR). The tract at residues 215-249 (SPMSAVSPSGNAPMGKMPSGIKTNIKSANQVHPYR) is disordered.

The protein belongs to the Mediator complex subunit 8 family. Component of the Mediator complex.

The protein resides in the nucleus. In terms of biological role, component of the Mediator complex, a coactivator involved in the regulated transcription of nearly all RNA polymerase II-dependent genes. Mediator functions as a bridge to convey information from gene-specific regulatory proteins to the basal RNA polymerase II transcription machinery. Mediator is recruited to promoters by direct interactions with regulatory proteins and serves as a scaffold for the assembly of a functional preinitiation complex with RNA polymerase II and the general transcription factors. This Anopheles gambiae (African malaria mosquito) protein is Mediator of RNA polymerase II transcription subunit 8 (MED8).